The chain runs to 272 residues: Indole-3-glycerol phosphate synthase (272 aa).

It belongs to the TrpC family.

The enzyme catalyses 1-(2-carboxyphenylamino)-1-deoxy-D-ribulose 5-phosphate + H(+) = (1S,2R)-1-C-(indol-3-yl)glycerol 3-phosphate + CO2 + H2O. The protein operates within amino-acid biosynthesis; L-tryptophan biosynthesis; L-tryptophan from chorismate: step 4/5. This Mycobacterium leprae (strain Br4923) protein is Indole-3-glycerol phosphate synthase.